Reading from the N-terminus, the 291-residue chain is Phytanoyl-CoA dioxygenase domain-containing protein 1 (291 aa).

Position 55 is a phosphothreonine (Thr-55). 2-oxoglutarate-binding positions include Lys-102, Met-141, 156–158, and Trp-174; that span reads HQD. 2 residues coordinate Fe cation: His-156 and Asp-158. His-246 contributes to the Fe cation binding site. 2-oxoglutarate-binding residues include Ser-248 and Arg-257.

It belongs to the PhyH family. PHYHD1 subfamily. The cofactor is Fe cation.

Activity is increased by ascorbate. Inhibited by myristoyl-CoA. Its function is as follows. 2-oxoglutarate(2OG)-dependent dioxygenase that catalyzes the conversion of 2-oxoglutarate to succinate and CO(2) in an iron-dependent manner. However, does not couple 2OG turnover to the hydroxylation of acyl-coenzyme A derivatives, implying that it is not directly involved in phytanoyl coenzyme-A metabolism. Does not show detectable activity towards fatty acid CoA thioesters. In terms of biological role, isoform 2 probably lacks enzyme activity. Functionally, isoform 3 probably lacks enzyme activity. The sequence is that of Phytanoyl-CoA dioxygenase domain-containing protein 1 from Homo sapiens (Human).